Consider the following 476-residue polypeptide: Aspartyl/glutamyl-tRNA(Asn/Gln) amidotransferase subunit B (476 aa).

This sequence belongs to the GatB/GatE family. GatB subfamily. In terms of assembly, heterotrimer of A, B and C subunits.

The enzyme catalyses L-glutamyl-tRNA(Gln) + L-glutamine + ATP + H2O = L-glutaminyl-tRNA(Gln) + L-glutamate + ADP + phosphate + H(+). It catalyses the reaction L-aspartyl-tRNA(Asn) + L-glutamine + ATP + H2O = L-asparaginyl-tRNA(Asn) + L-glutamate + ADP + phosphate + 2 H(+). Allows the formation of correctly charged Asn-tRNA(Asn) or Gln-tRNA(Gln) through the transamidation of misacylated Asp-tRNA(Asn) or Glu-tRNA(Gln) in organisms which lack either or both of asparaginyl-tRNA or glutaminyl-tRNA synthetases. The reaction takes place in the presence of glutamine and ATP through an activated phospho-Asp-tRNA(Asn) or phospho-Glu-tRNA(Gln). The protein is Aspartyl/glutamyl-tRNA(Asn/Gln) amidotransferase subunit B of Clostridium botulinum (strain 657 / Type Ba4).